Consider the following 732-residue polypeptide: DNA-directed RNA polymerase subunit beta' (732 aa).

4 residues coordinate Zn(2+): cysteine 70, cysteine 72, cysteine 85, and cysteine 88. Aspartate 575, aspartate 577, and aspartate 579 together coordinate Mg(2+).

It belongs to the RNA polymerase beta' chain family. RpoC1 subfamily. In terms of assembly, in plastids the minimal PEP RNA polymerase catalytic core is composed of four subunits: alpha, beta, beta', and beta''. When a (nuclear-encoded) sigma factor is associated with the core the holoenzyme is formed, which can initiate transcription. Mg(2+) serves as cofactor. The cofactor is Zn(2+).

Its subcellular location is the plastid. It is found in the chloroplast. It catalyses the reaction RNA(n) + a ribonucleoside 5'-triphosphate = RNA(n+1) + diphosphate. Its function is as follows. DNA-dependent RNA polymerase catalyzes the transcription of DNA into RNA using the four ribonucleoside triphosphates as substrates. The sequence is that of DNA-directed RNA polymerase subunit beta' from Thalassiosira pseudonana (Marine diatom).